Here is a 327-residue protein sequence, read N- to C-terminus: Annexin A8 (327 aa).

4 Annexin repeats span residues 21–92 (FNPD…ALMY), 93–164 (PPYR…CLLQ), 177–249 (GLAL…TVVK), and 253–324 (NLHS…SLVG). Residues Met266, Gly268, Gly270, and Asp310 each contribute to the Ca(2+) site.

This sequence belongs to the annexin family.

Its function is as follows. This protein is an anticoagulant protein that acts as an indirect inhibitor of the thromboplastin-specific complex, which is involved in the blood coagulation cascade. The sequence is that of Annexin A8 from Homo sapiens (Human).